Consider the following 176-residue polypeptide: Dual-action ribosomal maturation protein DarP (176 aa).

Belongs to the DarP family.

Its subcellular location is the cytoplasm. Member of a network of 50S ribosomal subunit biogenesis factors which assembles along the 30S-50S interface, preventing incorrect 23S rRNA structures from forming. Promotes peptidyl transferase center (PTC) maturation. This chain is Dual-action ribosomal maturation protein DarP, found in Actinobacillus pleuropneumoniae serotype 5b (strain L20).